A 377-amino-acid chain; its full sequence is MPVLEHVDSLLYLGLMSGTSADGIDAALVRFAEDTHRRCELVAGTTVAWEPQLRETLVALGQGAETVAIDALGQLDAQVGLAFAAAANQLIRDSGVERRRIRAIGSHGQTIRHRPEADPAFTWQIGDASRIAEHTGITTVADFRRRDVAAGGQGAPLMPAFHLAMLGAGDQDSAVLNLGGIGNLTLIPRDGAVLGFDTGPANALLDSWCQRHHGTPFDAEGAFAASGRVDAALLQALLADPWFALPPPKSTGREQFHLDWVLQAMGSARLDAADVQATLLELTAASVADALLRLQPSTRRVLVCGGGVRNPVLLARLAARLPGVVVESSARYGLDPDYLEAMGFAWLAAELLAGRAANLPSVTGAAGPRLLGAIYPA.

18–25 (GTSADGID) provides a ligand contact to ATP.

This sequence belongs to the anhydro-N-acetylmuramic acid kinase family.

The catalysed reaction is 1,6-anhydro-N-acetyl-beta-muramate + ATP + H2O = N-acetyl-D-muramate 6-phosphate + ADP + H(+). It functions in the pathway amino-sugar metabolism; 1,6-anhydro-N-acetylmuramate degradation. It participates in cell wall biogenesis; peptidoglycan recycling. Catalyzes the specific phosphorylation of 1,6-anhydro-N-acetylmuramic acid (anhMurNAc) with the simultaneous cleavage of the 1,6-anhydro ring, generating MurNAc-6-P. Is required for the utilization of anhMurNAc either imported from the medium or derived from its own cell wall murein, and thus plays a role in cell wall recycling. The chain is Anhydro-N-acetylmuramic acid kinase from Xanthomonas oryzae pv. oryzae (strain MAFF 311018).